We begin with the raw amino-acid sequence, 479 residues long: Catalase A (479 aa).

The segment covering 1-21 has biased composition (polar residues); that stretch reads MSKILTTASGAPVADNQNSRS. The segment at 1–25 is disordered; sequence MSKILTTASGAPVADNQNSRSAGPR. Residues histidine 53 and asparagine 126 contribute to the active site. Tyrosine 336 serves as a coordination point for heme. Residues 350–376 are disordered; that stretch reads QLPVNAPRCPVNSYQRDGSMATGSYGS. Residues 361–376 are compositionally biased toward polar residues; that stretch reads NSYQRDGSMATGSYGS.

This sequence belongs to the catalase family. It depends on heme as a cofactor.

The catalysed reaction is 2 H2O2 = O2 + 2 H2O. With respect to regulation, activated by peroxide. In terms of biological role, the major expressed catalase protein in strain Corvallis in stationary phase. Decomposes hydrogen peroxide into water and oxygen; serves to protect cells from the toxic effects of hydrogen peroxide. The polypeptide is Catalase A (katA) (Pseudomonas putida (Arthrobacter siderocapsulatus)).